The chain runs to 150 residues: Calmodulin (150 aa).

4 consecutive EF-hand domains span residues 9-44 (EQIAEFREAFSLFDRDQDGNITSNELGVVMRSLGQS), 45-80 (PTAAELQDMINEVDADGNGTIDFTEFLTMMARKMKD), 82-117 (DNEEEVREAFKVFDKDGNGYITVEELTHVLTSLGER), and 118-150 (LSQEEVADMIREADTDGDGVINYEEFSRVISSK). Ca(2+)-binding residues include D22, D24, D26, N28, E33, D58, D60, N62, T64, E69, D95, D97, N99, Y101, E106, D131, D133, D135, and E142.

This sequence belongs to the calmodulin family. Interacts with rng2.

The protein resides in the cytoplasm. It is found in the cytoskeleton. The protein localises to the microtubule organizing center. Its subcellular location is the spindle pole body. Functionally, calmodulin mediates the control of a large number of enzymes, ion channels and other proteins by Ca(2+). Among the enzymes to be stimulated by the calmodulin-Ca(2+) complex are a number of protein kinases and phosphatases. This is Calmodulin (cam1) from Schizosaccharomyces pombe (strain 972 / ATCC 24843) (Fission yeast).